A 349-amino-acid chain; its full sequence is Transcription initiation factor TFIID subunit 7 (349 aa).

The [KR]-[STA]-K motif signature appears at 3–5; it reads KSK. A disordered region spans residues 105 to 126; it reads PPVEEPVASTDPKASKKKDKDK. 4 positions are modified to phosphoserine: serine 171, serine 200, serine 201, and serine 213. The interval 186–212 is disordered; that stretch reads EDETKEAENQGLDISSPGMSGHRQGHD. The tract at residues 227–247 is disordered; that stretch reads SSSSEDEDETQHQDEEDINII. The segment covering 230–247 has biased composition (acidic residues); the sequence is SEDEDETQHQDEEDINII. Residues 244–349 adopt a coiled-coil conformation; the sequence is INIIDTEEDL…QEELESLLEK (106 aa). Phosphoserine is present on serine 264. Residues 328-349 form a disordered region; sequence KEDREKEQLSSLQEELESLLEK.

Belongs to the TAF7 family. Component of the TFIID basal transcription factor complex, composed of TATA-box-binding protein TBP, and a number of TBP-associated factors (TAFs), including TAF1, TAF2, TAF3, TAF4, TAF5, TAF6, TAF7, TAF8, TAF9, TAF10, TAF11, TAF12 and TAF13. Part of a TFIID-containing RNA polymerase II pre-initiation complex that is composed of TBP and at least GTF2A1, GTF2A2, GTF2E1, GTF2E2, GTF2F1, GTF2H2, GTF2H3, GTF2H4, GTF2H5, GTF2B, TCEA1, ERCC2, ERCC3, TAF1, TAF2, TAF3, TAF4, TAF5, TAF6, TAF7, TAF8, TAF9, TAF10, TAF11, TAF12 and TAF13. Interacts with TAF1; the interaction is direct. Interacts with TAF1, TAF5, TAF11, TAF12, and TAF13, but not with TAF10 or TBP. Component of some MLL1/MLL complex, at least composed of the core components KMT2A/MLL1, ASH2L, HCFC1/HCF1, WDR5 and RBBP5, as well as the facultative components BACC1, CHD8, E2F6, HSP70, INO80C, KANSL1, LAS1L, MAX, MCRS1, MGA, MYST1/MOF, PELP1, PHF20, PRP31, RING2, RUVB1/TIP49A, RUVB2/TIP49B, SENP3, TAF1, TAF4, TAF6, TAF7, TAF9 and TEX10. Interacts with CIITA and TAF1 and inhibits their acetyltransferase activity, and behaving as a repressor of CIITA- and TAF1-regulated promoters. Post-translationally, phosphorylated by CIITA. Phosphorylation at Ser-264 by TAF1 in early G1 phase disrupts binding to TAF1. Ubiquitinated by TRIM26; leading to proteasomal degradation. Ubiquitous.

It is found in the nucleus. In terms of biological role, the TFIID basal transcription factor complex plays a major role in the initiation of RNA polymerase II (Pol II)-dependent transcription. TFIID recognizes and binds promoters with or without a TATA box via its subunit TBP, a TATA-box-binding protein, and promotes assembly of the pre-initiation complex (PIC). The TFIID complex consists of TBP and TBP-associated factors (TAFs), including TAF1, TAF2, TAF3, TAF4, TAF5, TAF6, TAF7, TAF8, TAF9, TAF10, TAF11, TAF12 and TAF13. TAF7 forms a promoter DNA binding subcomplex of TFIID, together with TAF1 and TAF2. Part of a TFIID complex containing TAF10 (TFIID alpha) and a TFIID complex lacking TAF10 (TFIID beta). This Homo sapiens (Human) protein is Transcription initiation factor TFIID subunit 7 (TAF7).